The sequence spans 228 residues: UPF0758 protein stu1465 (228 aa).

The region spanning Gln103 to Asp225 is the MPN domain. Residues His174, His176, and Asp187 each coordinate Zn(2+). The JAMM motif motif lies at His174 to Asp187.

This sequence belongs to the UPF0758 family.

This chain is UPF0758 protein stu1465, found in Streptococcus thermophilus (strain ATCC BAA-250 / LMG 18311).